A 568-amino-acid chain; its full sequence is Putative ABC transporter ATP-binding protein CPE1583 (568 aa).

2 consecutive ABC transporter domains span residues 7-248 and 303-536; these read IEFK…GIRE and LEFK…ASLK. ATP is bound by residues 41–48 and 336–343; these read GPSGSGKS and GKNGAGKS.

This sequence belongs to the ABC transporter superfamily.

The protein localises to the cell membrane. Functionally, probably part of an ABC transporter complex. Responsible for energy coupling to the transport system. The sequence is that of Putative ABC transporter ATP-binding protein CPE1583 from Clostridium perfringens (strain 13 / Type A).